Reading from the N-terminus, the 872-residue chain is Leucine--tRNA ligase (872 aa).

The 'HIGH' region signature appears at 56 to 66 (PYPSGNLHMGH). The 'KMSKS' region motif lies at 629–633 (KMSKS). An ATP-binding site is contributed by Lys632.

This sequence belongs to the class-I aminoacyl-tRNA synthetase family.

The protein resides in the cytoplasm. The catalysed reaction is tRNA(Leu) + L-leucine + ATP = L-leucyl-tRNA(Leu) + AMP + diphosphate. This is Leucine--tRNA ligase from Prochlorococcus marinus (strain MIT 9211).